The sequence spans 218 residues: MGNITAKLVKDLRDKTGAGMMDCKKALNETEGNLDKALEWLRKKGIASAEKKSGRVAAEGSIGSYIHTGSRVGVLLELNCETDFVARGDIFQSLLKDVSMQVAACPNVEYVSIDEIPEDVVEKEKQIEMGRDDLSGKPEQIKEKIVEGRIAKRLNELVLLSQPYIKDSSLTVEDLVKQAAAKIGENIKVRRFTRYTLGEGIEKNQMDFAEEVASMQKN.

The involved in Mg(2+) ion dislocation from EF-Tu stretch occupies residues 82–85 (TDFV).

The protein belongs to the EF-Ts family.

Its subcellular location is the cytoplasm. Functionally, associates with the EF-Tu.GDP complex and induces the exchange of GDP to GTP. It remains bound to the aminoacyl-tRNA.EF-Tu.GTP complex up to the GTP hydrolysis stage on the ribosome. In Prochlorococcus marinus (strain AS9601), this protein is Elongation factor Ts.